The chain runs to 198 residues: Holliday junction branch migration complex subunit RuvA (198 aa).

A domain I region spans residues 1–63 (MYDYIKGQLT…EDAHLLFGFH (63 aa)). The domain II stretch occupies residues 64–142 (TEDEKDVFLK…EAPQETGHTK (79 aa)). A flexible linker region spans residues 143-147 (ARSNK). The interval 148 to 198 (AGNTQLDEAIEALLALGYKAKELKKIRAFFEGTSETAEQYIKSALKLLMKG) is domain III.

Belongs to the RuvA family. In terms of assembly, homotetramer. Forms an RuvA(8)-RuvB(12)-Holliday junction (HJ) complex. HJ DNA is sandwiched between 2 RuvA tetramers; dsDNA enters through RuvA and exits via RuvB. An RuvB hexamer assembles on each DNA strand where it exits the tetramer. Each RuvB hexamer is contacted by two RuvA subunits (via domain III) on 2 adjacent RuvB subunits; this complex drives branch migration. In the full resolvosome a probable DNA-RuvA(4)-RuvB(12)-RuvC(2) complex forms which resolves the HJ.

The protein resides in the cytoplasm. Functionally, the RuvA-RuvB-RuvC complex processes Holliday junction (HJ) DNA during genetic recombination and DNA repair, while the RuvA-RuvB complex plays an important role in the rescue of blocked DNA replication forks via replication fork reversal (RFR). RuvA specifically binds to HJ cruciform DNA, conferring on it an open structure. The RuvB hexamer acts as an ATP-dependent pump, pulling dsDNA into and through the RuvAB complex. HJ branch migration allows RuvC to scan DNA until it finds its consensus sequence, where it cleaves and resolves the cruciform DNA. This chain is Holliday junction branch migration complex subunit RuvA, found in Streptococcus pyogenes serotype M1.